A 740-amino-acid polypeptide reads, in one-letter code: Dynein regulatory complex protein 1 (740 aa).

Residues 56–75 (GEYLDGKKESEEDQSKSYKQ) are disordered. The stretch at 101–387 (IDIREIHRRV…LQFKELQKAM (287 aa)) forms a coiled coil. Residues 573-620 (EKASMEETSMGSELELAEQTEMEGAKEESLVEGEKEEEEETPPSPWDI) are disordered. Residues 595-605 (EGAKEESLVEG) are compositionally biased toward basic and acidic residues. Residues 691–724 (LTQRAKLLLENSSLEQRNTELQALLQQYLNSKIN) adopt a coiled-coil conformation.

It belongs to the DRC1 family. As to quaternary structure, component of the nexin-dynein regulatory complex (N-DRC). Interacts with CCDC65/DRC2, DRC3, GAS8/DRC4 and TCTE1/DRC5.

Its subcellular location is the cytoplasm. The protein localises to the cytoskeleton. It is found in the cilium axoneme. It localises to the flagellum axoneme. Its function is as follows. Component of the nexin-dynein regulatory complex (N-DRC) a key regulator of ciliary/flagellar motility which maintains the alignment and integrity of the distal axoneme and regulates microtubule sliding in motile axonemes. Plays a critical role in the assembly of N-DRC and also stabilizes the assembly of multiple inner dynein arms and radial spokes. Coassembles with CCDC65/DRC2 to form a central scaffold needed for assembly of the N-DRC and its attachment to the outer doublet microtubules. The polypeptide is Dynein regulatory complex protein 1 (DRC1) (Macaca fascicularis (Crab-eating macaque)).